A 538-amino-acid polypeptide reads, in one-letter code: Mitochondrial distribution and morphology protein 34 (538 aa).

The SMP-LTD domain occupies 1–224; sequence MSFRFDRSVF…LPTALFNMSQ (224 aa). Disordered regions lie at residues 26–55 and 231–251; these read ALNPKSRRHVERADEAGNEDDSSGHQRKSG and DGSRSSAKHKKDTCDENNQPS.

It belongs to the MDM34 family. In terms of assembly, component of the ER-mitochondria encounter structure (ERMES) or MDM complex, composed of MMM1, MDM10, MDM12 and MDM34.

Its subcellular location is the mitochondrion outer membrane. Functionally, component of the ERMES/MDM complex, which serves as a molecular tether to connect the endoplasmic reticulum (ER) and mitochondria. Components of this complex are involved in the control of mitochondrial shape and protein biogenesis, and function in nonvesicular lipid trafficking between the ER and mitochondria. MDM34 is required for the interaction of the ER-resident membrane protein MMM1 and the outer mitochondrial membrane-resident beta-barrel protein MDM10. This chain is Mitochondrial distribution and morphology protein 34, found in Candida glabrata (strain ATCC 2001 / BCRC 20586 / JCM 3761 / NBRC 0622 / NRRL Y-65 / CBS 138) (Yeast).